We begin with the raw amino-acid sequence, 383 residues long: MQAVGLITEYNPLHNGHRYHLRQAQQLTNADCVIVVMSGDWLQRGEPAILDKWTRAKLALENGADLVIELPVFFATQPAHLFARGGIELLSALDCTSVVFGAEHPELDFQRLATAIAARQGSFTHYNATFATQFNAALQAATGVTLTAANDMLSFCYYAANQTLAHPMQLLPIKRRQADHATTTIAADSRYASGTAVRQAALAQDWAALKPVVPADTFTALTTQRLQRWSDFWPFLQYQLLTVDVARSGQYDQMAEGLEYRMQAMAQHATTFDDFIHQVKSKRYTYTRLQRVATAALLQLTQAEVQKAQAHNYLRVLGFTPKGQAYLHQVKKQLPLPLYTKINQDLRQHALNLDYRAGRVYQLINGQSQDLYRQPWRLPVTIG.

ATP contacts are provided by residues 7 to 20 (ITEY…HRYH), glycine 101, asparagine 150, and arginine 175.

The protein belongs to the TmcAL family.

It is found in the cytoplasm. The catalysed reaction is cytidine(34) in elongator tRNA(Met) + acetate + ATP = N(4)-acetylcytidine(34) in elongator tRNA(Met) + AMP + diphosphate. In terms of biological role, catalyzes the formation of N(4)-acetylcytidine (ac(4)C) at the wobble position of elongator tRNA(Met), using acetate and ATP as substrates. First activates an acetate ion to form acetyladenylate (Ac-AMP) and then transfers the acetyl group to tRNA to form ac(4)C34. The sequence is that of tRNA(Met) cytidine acetate ligase from Lactiplantibacillus plantarum (strain ATCC BAA-793 / NCIMB 8826 / WCFS1) (Lactobacillus plantarum).